The primary structure comprises 513 residues: ATP synthase subunit alpha (513 aa).

170-177 contributes to the ATP binding site; that stretch reads GDRQTGKT.

This sequence belongs to the ATPase alpha/beta chains family. In terms of assembly, F-type ATPases have 2 components, CF(1) - the catalytic core - and CF(0) - the membrane proton channel. CF(1) has five subunits: alpha(3), beta(3), gamma(1), delta(1), epsilon(1). CF(0) has three main subunits: a(1), b(2) and c(9-12). The alpha and beta chains form an alternating ring which encloses part of the gamma chain. CF(1) is attached to CF(0) by a central stalk formed by the gamma and epsilon chains, while a peripheral stalk is formed by the delta and b chains.

The protein localises to the cell inner membrane. The catalysed reaction is ATP + H2O + 4 H(+)(in) = ADP + phosphate + 5 H(+)(out). Produces ATP from ADP in the presence of a proton gradient across the membrane. The alpha chain is a regulatory subunit. This Teredinibacter turnerae (strain ATCC 39867 / T7901) protein is ATP synthase subunit alpha.